A 523-amino-acid chain; its full sequence is NAD(P) transhydrogenase subunit alpha (523 aa).

Topologically, residues 1–411 (MKIGAPREIF…AEIATFRKQT (411 aa)) are cytoplasmic. NAD(+) contacts are provided by residues 127 to 130 (QKMD), Val-177, 197 to 199 (DVR), and Gly-229. 2 helical membrane passes run 412-432 (VSQV…GMYA) and 433-455 (PPSF…QVIW). Residues 456 to 464 (NVSHSLHTP) are Cytoplasmic-facing. A helical transmembrane segment spans residues 465–485 (LMAVTNAISGIVILGALLQIG). The Periplasmic portion of the chain corresponds to 486-489 (SGNV). The helical transmembrane segment at 490–510 (LVVLLAAISVLIATINIVGGF) threads the bilayer. Over 511 to 523 (LVTRRMLAMFQKS) the chain is Cytoplasmic.

It belongs to the AlaDH/PNT family. As to quaternary structure, heterodimer of an alpha (PntA) and a beta (PntB) chain.

The protein resides in the cell inner membrane. The enzyme catalyses NAD(+) + NADPH + H(+)(in) = NADH + NADP(+) + H(+)(out). Functionally, the transhydrogenation between NADH and NADP is coupled to respiration and ATP hydrolysis and functions as a proton pump across the membrane. The chain is NAD(P) transhydrogenase subunit alpha from Cereibacter sphaeroides (Rhodobacter sphaeroides).